The following is a 344-amino-acid chain: Sorting nexin-16 (344 aa).

Over residues 1–10 the composition is skewed to pro residues; sequence MATPYVPVPM. 2 disordered regions span residues 1 to 49 and 83 to 105; these read MATP…DSSV and SIEY…NWED. A compositionally biased stretch (polar residues) spans 14–26; that stretch reads NSASSFTNNRNQR. Residues 27-40 show a composition bias toward low complexity; that stretch reads SSSFGSVSTSSNSS. Residues 88-105 show a composition bias toward basic and acidic residues; it reads ARPRDTEEQHPDALNWED. Positions 105–218 constitute a PX domain; the sequence is DRPSTPTILG…EFLCLDDPPG (114 aa). A 1,2-diacyl-sn-glycero-3-phospho-(1D-myo-inositol-3-phosphate) is bound by residues R144, T146, and R184. S222 carries the phosphoserine modification. The stretch at 223–278 forms a coiled coil; it reads LEESRAFCETLEETNYHLQRELLEKQKEVESLKKLLGEKQLHIDALETRIRTLSLE.

The protein belongs to the sorting nexin family. As to quaternary structure, homooligomer. Interacts with EGFR.

The protein resides in the early endosome membrane. It localises to the late endosome membrane. The protein localises to the cytoplasm. Its subcellular location is the lysosome. May be involved in several stages of intracellular trafficking. Plays a role in protein transport from early to late endosomes. Plays a role in protein transport to the lysosome. Promotes degradation of EGFR after EGF signaling. In Rattus norvegicus (Rat), this protein is Sorting nexin-16 (Snx16).